The following is a 487-amino-acid chain: Protein translocase subunit SecY (487 aa).

Residues 1–20 are Cytoplasmic-facing; sequence MSWKDTAEPLLVRMPAVQRP. The chain crosses the membrane as a helical span at residues 21–47; that stretch reads EGHVPFKRKLTWTGGVLLLYFFLTNVK. Residues 48–59 are Extracellular-facing; the sequence is LFGLDIDASQQV. The helical intramembrane region spans 60-67; that stretch reads FGRFSSIL. A discontinuously helical transmembrane segment spans residues 60–88; sequence FGRFSSILASGQGSIMQLGIGPIVTASIV. An intramembrane segment occupies 68–79; the sequence is ASGQGSIMQLGI. An intramembrane region (helical) is located at residues 80–88; sequence GPIVTASIV. The Cytoplasmic portion of the chain corresponds to 89-110; the sequence is LQLLGGADLLGLNTQDDPRDQI. Residues 111–135 traverse the membrane as a helical segment; it reads LYQGLQKLLVLVMICLTGLPMVFAG. At 136 to 153 the chain is on the extracellular side; sequence GFLPADTAVANSLGIGTA. The helical transmembrane segment at 154–178 threads the bilayer; that stretch reads GVQWLIFAQMFVGGVLILFMDEVIS. Topologically, residues 179 to 184 are cytoplasmic; it reads KWGVGS. Residues 185–203 form a helical membrane-spanning segment; that stretch reads GIGLFIVAGVSQRLVGGLL. The Extracellular segment spans residues 204-244; that stretch reads TAPFLGNSEGIIYTWYLFITGERGTGPVLAADGLQTVLLQG. Residues 245-266 traverse the membrane as a helical segment; it reads ELLGLFTTVLIFAVVVYAESVR. Residues 267–291 lie on the Cytoplasmic side of the membrane; that stretch reads VEIPLSNARVKGARGRFPVKLIYAS. The chain crosses the membrane as a helical span at residues 292-313; that stretch reads VLPMILVRALQANIQFLGRILN. Residues 314 to 364 lie on the Extracellular side of the membrane; sequence AQLGSMPAFLGTYANGQPTGGLFYFLAPIQSRGDWMWWLEGTAQPVWQILT. Residues 365 to 384 form a helical membrane-spanning segment; sequence RVGIDLFVMLVGGAVFAVFW. Residues 385–427 are Cytoplasmic-facing; it reads VETTDMGPEATAKQIHNSGMQIPGFRQNVGVIEKVLERYIPQV. The chain crosses the membrane as a helical span at residues 428-446; the sequence is TVIGGALVGLLAVMANMLG. At 447 to 451 the chain is on the extracellular side; that stretch reads TIGGV. A helical transmembrane segment spans residues 452–466; that stretch reads SGTGLLLTVSITYKL. Residues 467–487 lie on the Cytoplasmic side of the membrane; the sequence is YEEIAEEQLMEMHPMMRQMFG.

It belongs to the SecY/SEC61-alpha family. Component of the Sec protein translocase complex. Heterotrimer consisting of alpha (SecY), beta (SecG) and gamma (SecE) subunits. The heterotrimers can form oligomers, although 1 heterotrimer is thought to be able to translocate proteins. Interacts with the ribosome. May interact with SecDF, and other proteins may be involved.

It is found in the cell membrane. Functionally, the central subunit of the protein translocation channel SecYEG. Consists of two halves formed by TMs 1-5 and 6-10. These two domains form a lateral gate at the front which open onto the bilayer between TMs 2 and 7, and are clamped together by SecE at the back. The channel is closed by both a pore ring composed of hydrophobic SecY resides and a short helix (helix 2A) on the extracellular side of the membrane which forms a plug. The plug probably moves laterally to allow the channel to open. The ring and the pore may move independently. This Haloarcula marismortui (strain ATCC 43049 / DSM 3752 / JCM 8966 / VKM B-1809) (Halobacterium marismortui) protein is Protein translocase subunit SecY.